Reading from the N-terminus, the 434-residue chain is Autophagy-related protein 18 (434 aa).

WD repeat units lie at residues 1 to 34 (MNYV…KIFT), 183 to 223 (AHRA…KLYQ), and 228 to 267 (TYPS…TGLP). The short motif at 224–228 (FRRGT) is the L/FRRG motif element. The disordered stretch occupies residues 262–318 (PVTGLPESPQSPGDKDKWRRSRSFDSENGSPPAGISPGSEMADVPAEKSKSSGTFGS). Residues 274 to 286 (GDKDKWRRSRSFD) are compositionally biased toward basic and acidic residues. One copy of the WD 4 repeat lies at 367–407 (PRSGPVKSVVAMSSSSPQVMVVTSDGGFYIYSIDMETGGEG).

It belongs to the WD repeat PROPPIN family. Component of the PI(3,5)P2 regulatory complex.

It is found in the preautophagosomal structure membrane. It localises to the vacuole membrane. The protein resides in the endosome membrane. Its function is as follows. The PI(3,5)P2 regulatory complex regulates both the synthesis and turnover of phosphatidylinositol 3,5-bisphosphate (PtdIns(3,5)P2). Necessary for proper vacuole morphology. Plays an important role in osmotically-induced vacuole fragmentation. Required for cytoplasm to vacuole transport (Cvt) vesicle formation, pexophagy and starvation-induced autophagy. Involved in correct atg9 trafficking to the pre-autophagosomal structure. Might also be involved in premeiotic DNA replication. This Botryotinia fuckeliana (strain B05.10) (Noble rot fungus) protein is Autophagy-related protein 18 (atg18).